The primary structure comprises 369 residues: Homoserine O-succinyltransferase (369 aa).

Residues 1-21 (MVRIVPSARRTRAPAKLDGRS) are disordered. An AB hydrolase-1 domain is found at 86-350 (VVFVAGGISA…PFGHDAFLKE (265 aa)). An important for substrate specificity region spans residues 92 to 95 (GISA). Ser172 serves as the catalytic Nucleophile. Arg233 serves as a coordination point for substrate. Active-site residues include Asp314 and His344. Asp345 provides a ligand contact to substrate.

The protein belongs to the AB hydrolase superfamily. MetX family. As to quaternary structure, homodimer.

Its subcellular location is the cytoplasm. The enzyme catalyses L-homoserine + succinyl-CoA = O-succinyl-L-homoserine + CoA. It participates in amino-acid biosynthesis; L-methionine biosynthesis via de novo pathway; O-succinyl-L-homoserine from L-homoserine: step 1/1. Functionally, transfers a succinyl group from succinyl-CoA to L-homoserine, forming succinyl-L-homoserine. This is Homoserine O-succinyltransferase from Xanthomonas campestris pv. campestris (strain ATCC 33913 / DSM 3586 / NCPPB 528 / LMG 568 / P 25).